A 301-amino-acid chain; its full sequence is Glycine--tRNA ligase alpha subunit (301 aa).

This sequence belongs to the class-II aminoacyl-tRNA synthetase family. Tetramer of two alpha and two beta subunits.

It localises to the cytoplasm. The catalysed reaction is tRNA(Gly) + glycine + ATP = glycyl-tRNA(Gly) + AMP + diphosphate. The chain is Glycine--tRNA ligase alpha subunit from Polaromonas sp. (strain JS666 / ATCC BAA-500).